The primary structure comprises 71 residues: Small ribosomal subunit protein bS21 (71 aa).

This sequence belongs to the bacterial ribosomal protein bS21 family.

The polypeptide is Small ribosomal subunit protein bS21 (Thioalkalivibrio sulfidiphilus (strain HL-EbGR7)).